We begin with the raw amino-acid sequence, 229 residues long: MEGASFGAGRAGAALDPVSFARRPQTLLRVASWVFSIAVFGPIVNEGYVNTDSGPELRCVFNGNAGACRFGVALGLGAFLACAAFLLLDVRFQQISSVRDRRRAVLLDLGFSGLWSFLWFVGFCFLTNQWQRTAPGPATTQAGDAARAAIAFSFFSILSWVALTVKALQRFRLGTDMSLFATEQLSTGASQAYPGYPVGSGVEGTETYQSPPFTETLDTSPKGYQVPAY.

Residue methionine 1 is modified to N-acetylmethionine. The 153-residue stretch at 20–172 folds into the MARVEL domain; that stretch reads FARRPQTLLR…LTVKALQRFR (153 aa). 4 helical membrane-spanning segments follow: residues 30 to 50, 70 to 90, 105 to 125, and 148 to 168; these read VASW…GYVN, FGVA…LLDV, VLLD…GFCF, and AAIA…VKAL. Polar residues predominate over residues 209–219; the sequence is QSPPFTETLDT. The segment at 209–229 is disordered; that stretch reads QSPPFTETLDTSPKGYQVPAY.

This sequence belongs to the synaptogyrin family. In terms of assembly, interacts (via N-terminus) with SLC6A3 (via N-terminus). May interact with VMAT2. As to expression, expressed in brain and placenta.

The protein localises to the cytoplasmic vesicle. The protein resides in the secretory vesicle. Its subcellular location is the synaptic vesicle membrane. It localises to the synapse. Functionally, may play a role in regulated exocytosis. May indirectly regulate the activity of the plasma membrane dopamine transporter SLC6A3 and thereby regulate dopamine transport back from the synaptic cleft into the presynaptic terminal. The protein is Synaptogyrin-3 of Homo sapiens (Human).